The primary structure comprises 365 residues: Eukaryotic translation initiation factor 3 subunit H (365 aa).

Positions 11 to 160 constitute an MPN domain; the sequence is VKVEALVVMK…LRAFRLSPKF (150 aa).

It belongs to the eIF-3 subunit H family. In terms of assembly, component of the eukaryotic translation initiation factor 3 (eIF-3) complex.

It is found in the cytoplasm. Its function is as follows. Component of the eukaryotic translation initiation factor 3 (eIF-3) complex, which is involved in protein synthesis of a specialized repertoire of mRNAs and, together with other initiation factors, stimulates binding of mRNA and methionyl-tRNAi to the 40S ribosome. The eIF-3 complex specifically targets and initiates translation of a subset of mRNAs involved in cell proliferation. In Aspergillus terreus (strain NIH 2624 / FGSC A1156), this protein is Eukaryotic translation initiation factor 3 subunit H.